We begin with the raw amino-acid sequence, 369 residues long: 4-hydroxy-3-methylbut-2-en-1-yl diphosphate synthase (flavodoxin) (369 aa).

Cysteine 270, cysteine 273, cysteine 305, and glutamate 312 together coordinate [4Fe-4S] cluster.

This sequence belongs to the IspG family. Requires [4Fe-4S] cluster as cofactor.

The enzyme catalyses (2E)-4-hydroxy-3-methylbut-2-enyl diphosphate + oxidized [flavodoxin] + H2O + 2 H(+) = 2-C-methyl-D-erythritol 2,4-cyclic diphosphate + reduced [flavodoxin]. The protein operates within isoprenoid biosynthesis; isopentenyl diphosphate biosynthesis via DXP pathway; isopentenyl diphosphate from 1-deoxy-D-xylulose 5-phosphate: step 5/6. Its function is as follows. Converts 2C-methyl-D-erythritol 2,4-cyclodiphosphate (ME-2,4cPP) into 1-hydroxy-2-methyl-2-(E)-butenyl 4-diphosphate. This chain is 4-hydroxy-3-methylbut-2-en-1-yl diphosphate synthase (flavodoxin), found in Pseudomonas fluorescens (strain Pf0-1).